The primary structure comprises 186 residues: Acireductone dioxygenase (186 aa).

Fe(2+) contacts are provided by H103, H105, E109, and H147. H103, H105, E109, and H147 together coordinate Ni(2+).

The protein belongs to the acireductone dioxygenase (ARD) family. In terms of assembly, monomer. Requires Fe(2+) as cofactor. Ni(2+) is required as a cofactor.

The enzyme catalyses 1,2-dihydroxy-5-(methylsulfanyl)pent-1-en-3-one + O2 = 3-(methylsulfanyl)propanoate + CO + formate + 2 H(+). It catalyses the reaction 1,2-dihydroxy-5-(methylsulfanyl)pent-1-en-3-one + O2 = 4-methylsulfanyl-2-oxobutanoate + formate + 2 H(+). It functions in the pathway amino-acid biosynthesis; L-methionine biosynthesis via salvage pathway; L-methionine from S-methyl-5-thio-alpha-D-ribose 1-phosphate: step 5/6. In terms of biological role, catalyzes 2 different reactions between oxygen and the acireductone 1,2-dihydroxy-3-keto-5-methylthiopentene (DHK-MTPene) depending upon the metal bound in the active site. Fe-containing acireductone dioxygenase (Fe-ARD) produces formate and 2-keto-4-methylthiobutyrate (KMTB), the alpha-ketoacid precursor of methionine in the methionine recycle pathway. Ni-containing acireductone dioxygenase (Ni-ARD) produces methylthiopropionate, carbon monoxide and formate, and does not lie on the methionine recycle pathway. The sequence is that of Acireductone dioxygenase from Parasynechococcus marenigrum (strain WH8102).